The primary structure comprises 138 residues: ATP synthase epsilon chain (138 aa).

The protein belongs to the ATPase epsilon chain family. In terms of assembly, F-type ATPases have 2 components, CF(1) - the catalytic core - and CF(0) - the membrane proton channel. CF(1) has five subunits: alpha(3), beta(3), gamma(1), delta(1), epsilon(1). CF(0) has three main subunits: a, b and c.

Its subcellular location is the cell inner membrane. Its function is as follows. Produces ATP from ADP in the presence of a proton gradient across the membrane. In Geobacter sulfurreducens (strain ATCC 51573 / DSM 12127 / PCA), this protein is ATP synthase epsilon chain.